The sequence spans 256 residues: Ubiquinone/menaquinone biosynthesis C-methyltransferase UbiE (256 aa).

Residues Thr79, Asp100, and 128-129 each bind S-adenosyl-L-methionine; that span reads DA.

Belongs to the class I-like SAM-binding methyltransferase superfamily. MenG/UbiE family.

It catalyses the reaction a 2-demethylmenaquinol + S-adenosyl-L-methionine = a menaquinol + S-adenosyl-L-homocysteine + H(+). The catalysed reaction is a 2-methoxy-6-(all-trans-polyprenyl)benzene-1,4-diol + S-adenosyl-L-methionine = a 5-methoxy-2-methyl-3-(all-trans-polyprenyl)benzene-1,4-diol + S-adenosyl-L-homocysteine + H(+). It participates in quinol/quinone metabolism; menaquinone biosynthesis; menaquinol from 1,4-dihydroxy-2-naphthoate: step 2/2. The protein operates within cofactor biosynthesis; ubiquinone biosynthesis. Functionally, methyltransferase required for the conversion of demethylmenaquinol (DMKH2) to menaquinol (MKH2) and the conversion of 2-polyprenyl-6-methoxy-1,4-benzoquinol (DDMQH2) to 2-polyprenyl-3-methyl-6-methoxy-1,4-benzoquinol (DMQH2). The polypeptide is Ubiquinone/menaquinone biosynthesis C-methyltransferase UbiE (Pseudomonas fluorescens (strain SBW25)).